The primary structure comprises 732 residues: Prolyl endopeptidase-like (732 aa).

Residues serine 575, aspartate 661, and histidine 707 each act as charge relay system in the active site.

The protein belongs to the peptidase S9A family. As to quaternary structure, homodimer.

It is found in the cytoplasm. The protein resides in the cytosol. Its function is as follows. Serine peptidase whose precise substrate specificity remains unclear. Does not cleave peptides after a arginine or lysine residue. Regulates trans-Golgi network morphology and sorting by regulating the membrane binding of the AP-1 complex. May play a role in the regulation of synaptic vesicle exocytosis. The chain is Prolyl endopeptidase-like (PREPL) from Gallus gallus (Chicken).